A 98-amino-acid chain; its full sequence is NADH-ubiquinone oxidoreductase chain 4L (98 aa).

The next 3 membrane-spanning stretches (helical) occupy residues 1–21 (MTLI…GFLM), 29–49 (ALLC…LTVL), and 59–79 (MPII…ALLV).

The protein belongs to the complex I subunit 4L family. In terms of assembly, core subunit of respiratory chain NADH dehydrogenase (Complex I) which is composed of 45 different subunits.

The protein resides in the mitochondrion inner membrane. The catalysed reaction is a ubiquinone + NADH + 5 H(+)(in) = a ubiquinol + NAD(+) + 4 H(+)(out). Its function is as follows. Core subunit of the mitochondrial membrane respiratory chain NADH dehydrogenase (Complex I) which catalyzes electron transfer from NADH through the respiratory chain, using ubiquinone as an electron acceptor. Part of the enzyme membrane arm which is embedded in the lipid bilayer and involved in proton translocation. The sequence is that of NADH-ubiquinone oxidoreductase chain 4L (MT-ND4L) from Inia geoffrensis (Amazon river dolphin).